The primary structure comprises 190 residues: Cancer-related nucleoside-triphosphatase homolog (190 aa).

Ala-2 bears the N-acetylalanine mark. Residues 9–16 (GPPGVGKT) and 109–116 (ICVIDEVG) each bind ATP. Lys-165 carries the post-translational modification N6-acetyllysine.

It belongs to the THEP1 NTPase family. As to quaternary structure, monomer.

The enzyme catalyses a ribonucleoside 5'-triphosphate + H2O = a ribonucleoside 5'-diphosphate + phosphate + H(+). It carries out the reaction 5-methyl-UTP + H2O = 5-methyl-UDP + phosphate + H(+). The catalysed reaction is CTP + H2O = CDP + phosphate + H(+). It catalyses the reaction ATP + H2O = ADP + phosphate + H(+). The enzyme catalyses GTP + H2O = GDP + phosphate + H(+). Functionally, has nucleotide phosphatase activity towards ATP, GTP, CTP, TTP and UTP. Hydrolyzes nucleoside diphosphates with lower efficiency. The chain is Cancer-related nucleoside-triphosphatase homolog (NTPCR) from Bos taurus (Bovine).